The following is a 443-amino-acid chain: Probable glycine dehydrogenase (decarboxylating) subunit 1 (443 aa).

This sequence belongs to the GcvP family. N-terminal subunit subfamily. As to quaternary structure, the glycine cleavage system is composed of four proteins: P, T, L and H. In this organism, the P 'protein' is a heterodimer of two subunits.

It catalyses the reaction N(6)-[(R)-lipoyl]-L-lysyl-[glycine-cleavage complex H protein] + glycine + H(+) = N(6)-[(R)-S(8)-aminomethyldihydrolipoyl]-L-lysyl-[glycine-cleavage complex H protein] + CO2. Functionally, the glycine cleavage system catalyzes the degradation of glycine. The P protein binds the alpha-amino group of glycine through its pyridoxal phosphate cofactor; CO(2) is released and the remaining methylamine moiety is then transferred to the lipoamide cofactor of the H protein. The chain is Probable glycine dehydrogenase (decarboxylating) subunit 1 from Chloroherpeton thalassium (strain ATCC 35110 / GB-78).